Reading from the N-terminus, the 275-residue chain is Dermonecrotic toxin LspiSicTox-betaIE4i (275 aa).

The Mg(2+) site is built by Glu24 and Asp26. The active-site Nucleophile is His40. Disulfide bonds link Cys44–Cys50 and Cys46–Cys188. Asp84 is a Mg(2+) binding site.

This sequence belongs to the arthropod phospholipase D family. Class II subfamily. Requires Mg(2+) as cofactor. Expressed by the venom gland.

The protein localises to the secreted. It carries out the reaction an N-(acyl)-sphingosylphosphocholine = an N-(acyl)-sphingosyl-1,3-cyclic phosphate + choline. It catalyses the reaction an N-(acyl)-sphingosylphosphoethanolamine = an N-(acyl)-sphingosyl-1,3-cyclic phosphate + ethanolamine. The catalysed reaction is a 1-acyl-sn-glycero-3-phosphocholine = a 1-acyl-sn-glycero-2,3-cyclic phosphate + choline. The enzyme catalyses a 1-acyl-sn-glycero-3-phosphoethanolamine = a 1-acyl-sn-glycero-2,3-cyclic phosphate + ethanolamine. Dermonecrotic toxins cleave the phosphodiester linkage between the phosphate and headgroup of certain phospholipids (sphingolipid and lysolipid substrates), forming an alcohol (often choline) and a cyclic phosphate. This toxin acts on sphingomyelin (SM). It may also act on ceramide phosphoethanolamine (CPE), lysophosphatidylcholine (LPC) and lysophosphatidylethanolamine (LPE), but not on lysophosphatidylserine (LPS), and lysophosphatidylglycerol (LPG). It acts by transphosphatidylation, releasing exclusively cyclic phosphate products as second products. Induces dermonecrosis, hemolysis, increased vascular permeability, edema, inflammatory response, and platelet aggregation. This Loxosceles spinulosa (Recluse spider) protein is Dermonecrotic toxin LspiSicTox-betaIE4i.